Here is a 549-residue protein sequence, read N- to C-terminus: Glucose-6-phosphate isomerase (549 aa).

Catalysis depends on Glu-355, which acts as the Proton donor. Catalysis depends on residues His-386 and Lys-514.

This sequence belongs to the GPI family.

The protein resides in the cytoplasm. The enzyme catalyses alpha-D-glucose 6-phosphate = beta-D-fructose 6-phosphate. The protein operates within carbohydrate biosynthesis; gluconeogenesis. It participates in carbohydrate degradation; glycolysis; D-glyceraldehyde 3-phosphate and glycerone phosphate from D-glucose: step 2/4. Its function is as follows. Catalyzes the reversible isomerization of glucose-6-phosphate to fructose-6-phosphate. The chain is Glucose-6-phosphate isomerase from Salmonella choleraesuis (strain SC-B67).